The following is a 528-amino-acid chain: Tyrosine-protein kinase transforming protein Yes (528 aa).

Positions 1-12 (DKGPAMKYRTDN) are enriched in basic and acidic residues. The interval 1-35 (DKGPAMKYRTDNTPEPISSHVSHYGSDSSQATQSP) is disordered. Residues 18-29 (SSHVSHYGSDSS) show a composition bias toward low complexity. The SH3 domain maps to 81–142 (GGGTVFVALY…PSNYVAPADS (62 aa)). An SH2 domain is found at 148 to 245 (WYFGKMGRKD…GLCHKLTTVC (98 aa)). The Protein kinase domain maps to 267–520 (LRLEVKLGQG…YIQSFLEDYF (254 aa)). ATP contacts are provided by residues 273–281 (LGQGCFGEV) and Lys295. Residue Asp386 is the Proton acceptor of the active site. Tyr416 carries the post-translational modification Phosphotyrosine; by autocatalysis.

It belongs to the protein kinase superfamily. Tyr protein kinase family. SRC subfamily.

It catalyses the reaction L-tyrosyl-[protein] + ATP = O-phospho-L-tyrosyl-[protein] + ADP + H(+). In Galliformes (Y73SV), this protein is Tyrosine-protein kinase transforming protein Yes (V-YES).